Here is a 299-residue protein sequence, read N- to C-terminus: MMATLTTAISPQGPYVGRFAPSPSGALHFGSLVAALGSYLRARSLGGKWLIRIEDIDPPREVKGAADDILRTLEAYGFEWDDTVLYQSARTDAYQAKLDQLLAQDDAYFCQCSRKQIQAMGGIYDGRCHQLATPHQSGAIRLVNRAQVAEFTDNLMGKVVVDHDFATEDFIIKRSDGLYAYQLAVVLDDAHQGISEVVRGCDLIEASCRQLSLYQSLGLTAPQWLHLPLACLTPGFKLSKQNHAQAIDKQHPQASLNAALTFLGQSTVEPTSAAQMLAQAVAQFELTAVPKQREIILTA.

Residues 18–22 (RFAPS) and E54 each bind L-glutamate. The 'HIGH' region motif lies at 21-31 (PSPSGALHFGS). Zn(2+) contacts are provided by C110, C112, Y124, and C128. L-glutamate is bound by residues Y181 and R199. The 'KMSKS' region signature appears at 237–241 (KLSKQ). K240 contacts ATP.

Belongs to the class-I aminoacyl-tRNA synthetase family. GluQ subfamily. Zn(2+) is required as a cofactor.

In terms of biological role, catalyzes the tRNA-independent activation of glutamate in presence of ATP and the subsequent transfer of glutamate onto a tRNA(Asp). Glutamate is transferred on the 2-amino-5-(4,5-dihydroxy-2-cyclopenten-1-yl) moiety of the queuosine in the wobble position of the QUC anticodon. This Shewanella oneidensis (strain ATCC 700550 / JCM 31522 / CIP 106686 / LMG 19005 / NCIMB 14063 / MR-1) protein is Glutamyl-Q tRNA(Asp) synthetase.